The following is a 324-amino-acid chain: Galectin-4 (324 aa).

Galectin domains are found at residues tyrosine 19–leucine 150 and tyrosine 196–isoleucine 324. An a beta-D-galactoside-binding site is contributed by tryptophan 257 to lysine 263. Serine 259 carries the phosphoserine modification.

Monomer. As to expression, highly expressed in full-length form in small and large intestine and stomach but was not detected in other tissues including lung, liver, kidney and spleen.

Galectin that binds lactose and a related range of sugars. The polypeptide is Galectin-4 (Lgals4) (Rattus norvegicus (Rat)).